A 372-amino-acid polypeptide reads, in one-letter code: 4-hydroxy-3-methylbut-2-en-1-yl diphosphate synthase (flavodoxin) (372 aa).

[4Fe-4S] cluster-binding residues include Cys270, Cys273, Cys305, and Glu312.

It belongs to the IspG family. [4Fe-4S] cluster serves as cofactor.

The enzyme catalyses (2E)-4-hydroxy-3-methylbut-2-enyl diphosphate + oxidized [flavodoxin] + H2O + 2 H(+) = 2-C-methyl-D-erythritol 2,4-cyclic diphosphate + reduced [flavodoxin]. The protein operates within isoprenoid biosynthesis; isopentenyl diphosphate biosynthesis via DXP pathway; isopentenyl diphosphate from 1-deoxy-D-xylulose 5-phosphate: step 5/6. Its function is as follows. Converts 2C-methyl-D-erythritol 2,4-cyclodiphosphate (ME-2,4cPP) into 1-hydroxy-2-methyl-2-(E)-butenyl 4-diphosphate. This chain is 4-hydroxy-3-methylbut-2-en-1-yl diphosphate synthase (flavodoxin), found in Pseudoalteromonas translucida (strain TAC 125).